The primary structure comprises 468 residues: 3-isopropylmalate dehydratase large subunit (468 aa).

[4Fe-4S] cluster contacts are provided by Cys-347, Cys-408, and Cys-411.

The protein belongs to the aconitase/IPM isomerase family. LeuC type 1 subfamily. As to quaternary structure, heterodimer of LeuC and LeuD. [4Fe-4S] cluster serves as cofactor.

It carries out the reaction (2R,3S)-3-isopropylmalate = (2S)-2-isopropylmalate. It participates in amino-acid biosynthesis; L-leucine biosynthesis; L-leucine from 3-methyl-2-oxobutanoate: step 2/4. Functionally, catalyzes the isomerization between 2-isopropylmalate and 3-isopropylmalate, via the formation of 2-isopropylmaleate. The chain is 3-isopropylmalate dehydratase large subunit from Janthinobacterium sp. (strain Marseille) (Minibacterium massiliensis).